The sequence spans 388 residues: Succinate--CoA ligase [ADP-forming] subunit beta (388 aa).

The ATP-grasp domain occupies 9–244 (KEILRKFGVA…LDEEDPAEIE (236 aa)). Residues K46, 53–55 (GRG), E99, A102, and E107 each bind ATP. N199 and D213 together coordinate Mg(2+). Residues N264 and 321–323 (GIM) contribute to the substrate site.

The protein belongs to the succinate/malate CoA ligase beta subunit family. Heterotetramer of two alpha and two beta subunits. The cofactor is Mg(2+).

The catalysed reaction is succinate + ATP + CoA = succinyl-CoA + ADP + phosphate. The enzyme catalyses GTP + succinate + CoA = succinyl-CoA + GDP + phosphate. It participates in carbohydrate metabolism; tricarboxylic acid cycle; succinate from succinyl-CoA (ligase route): step 1/1. In terms of biological role, succinyl-CoA synthetase functions in the citric acid cycle (TCA), coupling the hydrolysis of succinyl-CoA to the synthesis of either ATP or GTP and thus represents the only step of substrate-level phosphorylation in the TCA. The beta subunit provides nucleotide specificity of the enzyme and binds the substrate succinate, while the binding sites for coenzyme A and phosphate are found in the alpha subunit. The protein is Succinate--CoA ligase [ADP-forming] subunit beta of Burkholderia lata (strain ATCC 17760 / DSM 23089 / LMG 22485 / NCIMB 9086 / R18194 / 383).